The sequence spans 452 residues: UDP-N-acetylmuramate--L-alanine ligase (452 aa).

Residue 121-127 coordinates ATP; sequence GTHGKTT.

Belongs to the MurCDEF family.

The protein localises to the cytoplasm. The enzyme catalyses UDP-N-acetyl-alpha-D-muramate + L-alanine + ATP = UDP-N-acetyl-alpha-D-muramoyl-L-alanine + ADP + phosphate + H(+). The protein operates within cell wall biogenesis; peptidoglycan biosynthesis. Functionally, cell wall formation. The polypeptide is UDP-N-acetylmuramate--L-alanine ligase (Christiangramia forsetii (strain DSM 17595 / CGMCC 1.15422 / KT0803) (Gramella forsetii)).